The sequence spans 349 residues: Heparin sulfate O-sulfotransferase (349 aa).

Residues 1–17 (MFRKLLKMWILLRPTHW) lie on the Cytoplasmic side of the membrane. A helical; Signal-anchor for type II membrane protein membrane pass occupies residues 18-38 (LILIALCAVTCAGYWLLWSEI). Over 39 to 349 (RLEHAFKPLS…KFMYEKIRPK (311 aa)) the chain is Lumenal. 2 N-linked (GlcNAc...) asparagine glycosylation sites follow: Asn107 and Asn126. Residues His139 and His141 contribute to the active site. Cystine bridges form between Cys200–Cys208 and Cys221–Cys227. Residue Asn282 is glycosylated (N-linked (GlcNAc...) asparagine).

Belongs to the sulfotransferase 3 family. As to quaternary structure, homotrimer.

It is found in the golgi apparatus membrane. Functionally, catalyzes the transfer of sulfate to the C2-position of selected hexuronic acid residues within the maturing heparan sulfate (HS). This is Heparin sulfate O-sulfotransferase from Drosophila melanogaster (Fruit fly).